A 288-amino-acid polypeptide reads, in one-letter code: Ice-binding protein (288 aa).

The signal sequence occupies residues 1–22 (MFSTTLINTFSLGLLAVVSVVA). Short sequence motifs (ice-binding site motif (T-A/G-X-T/N)) lie at residues 75-78 (TAGN) and 154-157 (TAFN). Asn194 is a glycosylation site (N-linked (GlcNAc...) asparagine). 2 short sequence motifs (ice-binding site motif (T-A/G-X-T/N)) span residues 196 to 199 (TGVT) and 265 to 268 (TGAT).

The protein belongs to the ice-binding protein family.

The protein resides in the secreted. Functionally, binds ice crystals and most probably inhibits their growth in order to prevent cell damage from extracellular ice. The chain is Ice-binding protein from Lentinula edodes (Shiitake mushroom).